The chain runs to 686 residues: Methionine--tRNA ligase (686 aa).

The 'HIGH' region motif lies at 15–25 (PYTNGPIHIGH). Zn(2+) contacts are provided by Cys-147, Cys-150, Cys-160, and Cys-163. The short motif at 336 to 340 (KLSTS) is the 'KMSKS' region element. Thr-339 lines the ATP pocket. The 103-residue stretch at 584 to 686 (DFAKMDLRVG…AGVGNGEGIN (103 aa)) folds into the tRNA-binding domain.

This sequence belongs to the class-I aminoacyl-tRNA synthetase family. MetG type 1 subfamily. In terms of assembly, homodimer. Zn(2+) serves as cofactor.

The protein localises to the cytoplasm. It carries out the reaction tRNA(Met) + L-methionine + ATP = L-methionyl-tRNA(Met) + AMP + diphosphate. Its function is as follows. Is required not only for elongation of protein synthesis but also for the initiation of all mRNA translation through initiator tRNA(fMet) aminoacylation. The chain is Methionine--tRNA ligase from Flavobacterium psychrophilum (strain ATCC 49511 / DSM 21280 / CIP 103535 / JIP02/86).